Here is a 111-residue protein sequence, read N- to C-terminus: Ribonuclease P protein component (111 aa).

This sequence belongs to the RnpA family. Consists of a catalytic RNA component (M1 or rnpB) and a protein subunit.

It carries out the reaction Endonucleolytic cleavage of RNA, removing 5'-extranucleotides from tRNA precursor.. In terms of biological role, RNaseP catalyzes the removal of the 5'-leader sequence from pre-tRNA to produce the mature 5'-terminus. It can also cleave other RNA substrates such as 4.5S RNA. The protein component plays an auxiliary but essential role in vivo by binding to the 5'-leader sequence and broadening the substrate specificity of the ribozyme. In Streptococcus thermophilus (strain CNRZ 1066), this protein is Ribonuclease P protein component.